The sequence spans 421 residues: MIVTLPARSGIELSVTTPPSKSYTHRALIAAALAQGRSTIVRPLMADDTKLTIASLMKLGVAIHADQHNIMLEGCDGSFPNTPGTVLDLDNSGTSLRLLASAALLATYPVTLTGSARMQERPLGPLAHTLNDLGGMVIFTKKEGYPPVTIGGRLLGGTATIDGSQSSQFASSVMMAAPYSKGPVDLTVTGTPASQSYLDITAGVMTDFGAVIRREGYRRFLVSNCNHYTGRTFVVEGDYSSASYFFALAAICGGKVTVAGLAPDSVQGDRLFLDALQRMGCEVTYAHDGVTVENQGPLTGITINMSSAPDTVQTLCMVAAVARTPTIITGIGHLKFKESDRIAVTADRLRMLGGIVTAERDRIVIQPATLHGGRIDPVNDHRTAMSFAVLGLGIGGITITGAECVNKSFPGFWEILSKVME.

3 residues coordinate 3-phosphoshikimate: K21, S22, and R26. K21 contacts phosphoenolpyruvate. 2 residues coordinate phosphoenolpyruvate: G93 and R121. The 3-phosphoshikimate site is built by S166, S167, Q168, S194, D310, and K337. Q168 is a binding site for phosphoenolpyruvate. D310 (proton acceptor) is an active-site residue. R341, R382, and K407 together coordinate phosphoenolpyruvate.

This sequence belongs to the EPSP synthase family. Monomer.

The protein resides in the cytoplasm. It catalyses the reaction 3-phosphoshikimate + phosphoenolpyruvate = 5-O-(1-carboxyvinyl)-3-phosphoshikimate + phosphate. It functions in the pathway metabolic intermediate biosynthesis; chorismate biosynthesis. In terms of biological role, catalyzes the transfer of the enolpyruvyl moiety of phosphoenolpyruvate (PEP) to the 5-hydroxyl of shikimate-3-phosphate (S3P) to produce enolpyruvyl shikimate-3-phosphate and inorganic phosphate. The polypeptide is 3-phosphoshikimate 1-carboxyvinyltransferase (Methanoregula boonei (strain DSM 21154 / JCM 14090 / 6A8)).